The following is a 355-amino-acid chain: Serum paraoxonase/arylesterase 1 (355 aa).

An intrachain disulfide couples Cys-42 to Cys-353. The Ca(2+) site is built by Glu-53 and Asp-54. Residue His-115 is the Proton acceptor of the active site. Ile-117, Asn-168, Asp-169, and Asn-224 together coordinate Ca(2+). The N-linked (GlcNAc...) asparagine glycan is linked to Asn-253. Ca(2+) contacts are provided by Asp-269 and Asn-270. Asn-270 and Asn-324 each carry an N-linked (GlcNAc...) asparagine glycan.

It belongs to the paraoxonase family. Homodimer. Interacts with CLU. Ca(2+) serves as cofactor. Glycosylated. In terms of processing, the signal sequence is not cleaved. In terms of tissue distribution, plasma. Associated with HDL.

It is found in the secreted. The protein localises to the extracellular space. The enzyme catalyses a phenyl acetate + H2O = a phenol + acetate + H(+). It carries out the reaction An aryl dialkyl phosphate + H2O = dialkyl phosphate + an aryl alcohol.. The catalysed reaction is an N-acyl-L-homoserine lactone + H2O = an N-acyl-L-homoserine + H(+). In terms of biological role, hydrolyzes the toxic metabolites of a variety of organophosphorus insecticides. Capable of hydrolyzing a broad spectrum of organophosphate substrates and lactones, and a number of aromatic carboxylic acid esters. Mediates an enzymatic protection of low density lipoproteins against oxidative modification. The sequence is that of Serum paraoxonase/arylesterase 1 (Pon1) from Rattus norvegicus (Rat).